Consider the following 343-residue polypeptide: 4-hydroxy-2-oxovalerate aldolase (343 aa).

Residues Pro-4–Met-254 enclose the Pyruvate carboxyltransferase domain. Arg-12–Asp-13 lines the substrate pocket. Residue Asp-13 participates in Mn(2+) binding. The active-site Proton acceptor is the His-16. The substrate site is built by Ser-166 and His-193. His-193 and His-195 together coordinate Mn(2+). Tyr-284 serves as a coordination point for substrate.

This sequence belongs to the 4-hydroxy-2-oxovalerate aldolase family.

The catalysed reaction is (S)-4-hydroxy-2-oxopentanoate = acetaldehyde + pyruvate. The sequence is that of 4-hydroxy-2-oxovalerate aldolase from Chloroflexus aurantiacus (strain ATCC 29364 / DSM 637 / Y-400-fl).